The chain runs to 392 residues: Speckle-type POZ protein-like (392 aa).

One can recognise an MATH domain in the interval 31-161 (KFSYMWTINN…DDKLTLFCEV (131 aa)). The BTB domain maps to 200 to 267 (TDCSFFVRGQ…IYTGRAPNLD (68 aa)).

Belongs to the Tdpoz family. Homodimer. Heterodimer with SPOP. Component of cullin-RING-based BCR (BTB-CUL3-RBX1) E3 ubiquitin-protein ligase complexes containing homodimeric SPOPL or the heterodimer formed by SPOP and SPOPL. Interacts with CUL3 and MACROH2A1.

It is found in the nucleus. It participates in protein modification; protein ubiquitination. In terms of biological role, component of a cullin-RING-based BCR (BTB-CUL3-RBX1) E3 ubiquitin-protein ligase complex that mediates the ubiquitination and subsequent proteasomal degradation of target proteins, but with relatively low efficiency. Cullin-RING-based BCR (BTB-CUL3-RBX1) E3 ubiquitin-protein ligase complexes containing homodimeric SPOPL or the heterodimer formed by SPOP and SPOPL are less efficient than ubiquitin ligase complexes containing only SPOP. May function to down-regulate the activity of cullin-RING-based BCR (BTB-CUL3-RBX1) E3 ubiquitin-protein ligase complexes that contain SPOP. The protein is Speckle-type POZ protein-like (SPOPL) of Homo sapiens (Human).